Reading from the N-terminus, the 136-residue chain is Late embryogenesis abundant protein D-7 (136 aa).

2 disordered regions span residues M1–A108 and G117–D136. Residues G11–K58 show a composition bias toward basic and acidic residues. LEA 11-mer repeat repeat units follow at residues K31–E41, T42–E52, T53–G63, A64–Q74, and T75–E85.

This sequence belongs to the LEA type 4 family.

Its function is as follows. LEA proteins are late embryonic proteins abundant in higher plant seed embryos. There are two subsets of LEA proteins (5a and 5b), the first ones are expressed when the cotyledon weight reach 80 mg and the second set are expressed above 100 mg. The function of those proteins is not known. This is Late embryogenesis abundant protein D-7 from Gossypium hirsutum (Upland cotton).